Here is a 145-residue protein sequence, read N- to C-terminus: uncharacterized protein (145 aa).

Residues 97–117 (ISMLLLIVIIAIGLTISYMVI) form a helical membrane-spanning segment.

The protein localises to the membrane. This is an uncharacterized protein from Methanocaldococcus jannaschii (strain ATCC 43067 / DSM 2661 / JAL-1 / JCM 10045 / NBRC 100440) (Methanococcus jannaschii).